We begin with the raw amino-acid sequence, 490 residues long: UDP-N-acetylmuramoyl-L-alanyl-D-glutamate--2,6-diaminopimelate ligase (490 aa).

S31 is a UDP-N-acetyl-alpha-D-muramoyl-L-alanyl-D-glutamate binding site. Residue 109 to 115 (GTNGKTS) participates in ATP binding. Residues N150, 151–152 (TT), S178, and R186 contribute to the UDP-N-acetyl-alpha-D-muramoyl-L-alanyl-D-glutamate site. At K218 the chain carries N6-carboxylysine. Residues R384, 408–411 (DNPR), G458, and E462 each bind meso-2,6-diaminopimelate. Residues 408 to 411 (DNPR) carry the Meso-diaminopimelate recognition motif motif.

Belongs to the MurCDEF family. MurE subfamily. Requires Mg(2+) as cofactor. Post-translationally, carboxylation is probably crucial for Mg(2+) binding and, consequently, for the gamma-phosphate positioning of ATP.

It localises to the cytoplasm. It catalyses the reaction UDP-N-acetyl-alpha-D-muramoyl-L-alanyl-D-glutamate + meso-2,6-diaminopimelate + ATP = UDP-N-acetyl-alpha-D-muramoyl-L-alanyl-gamma-D-glutamyl-meso-2,6-diaminopimelate + ADP + phosphate + H(+). It participates in cell wall biogenesis; peptidoglycan biosynthesis. Its function is as follows. Catalyzes the addition of meso-diaminopimelic acid to the nucleotide precursor UDP-N-acetylmuramoyl-L-alanyl-D-glutamate (UMAG) in the biosynthesis of bacterial cell-wall peptidoglycan. The polypeptide is UDP-N-acetylmuramoyl-L-alanyl-D-glutamate--2,6-diaminopimelate ligase (Bacillus velezensis (strain DSM 23117 / BGSC 10A6 / LMG 26770 / FZB42) (Bacillus amyloliquefaciens subsp. plantarum)).